A 55-amino-acid polypeptide reads, in one-letter code: Large ribosomal subunit protein bL33 (55 aa).

The protein belongs to the bacterial ribosomal protein bL33 family.

The sequence is that of Large ribosomal subunit protein bL33 from Bradyrhizobium sp. (strain BTAi1 / ATCC BAA-1182).